A 378-amino-acid chain; its full sequence is Succinyl-diaminopimelate desuccinylase (378 aa).

Zn(2+) is bound at residue histidine 68. The active site involves aspartate 70. Residue aspartate 101 participates in Zn(2+) binding. The Proton acceptor role is filled by glutamate 135. Residues glutamate 136, glutamate 164, and histidine 350 each contribute to the Zn(2+) site.

Belongs to the peptidase M20A family. DapE subfamily. In terms of assembly, homodimer. It depends on Zn(2+) as a cofactor. Co(2+) is required as a cofactor.

It catalyses the reaction N-succinyl-(2S,6S)-2,6-diaminopimelate + H2O = (2S,6S)-2,6-diaminopimelate + succinate. Its pathway is amino-acid biosynthesis; L-lysine biosynthesis via DAP pathway; LL-2,6-diaminopimelate from (S)-tetrahydrodipicolinate (succinylase route): step 3/3. Its function is as follows. Catalyzes the hydrolysis of N-succinyl-L,L-diaminopimelic acid (SDAP), forming succinate and LL-2,6-diaminopimelate (DAP), an intermediate involved in the bacterial biosynthesis of lysine and meso-diaminopimelic acid, an essential component of bacterial cell walls. This Acinetobacter baumannii (strain ACICU) protein is Succinyl-diaminopimelate desuccinylase.